A 213-amino-acid polypeptide reads, in one-letter code: Ephrin-A2 (213 aa).

Residues 1–24 form the signal peptide; that stretch reads MAPAQRPLLPLLLLLLPLPPPPFA. An Ephrin RBD domain is found at 34-174; that stretch reads SDRYAVYWNR…RLKVYVRPTN (141 aa). Residue Asn42 is glycosylated (N-linked (GlcNAc...) asparagine). Disulfide bonds link Cys73–Cys114 and Cys102–Cys163. N-linked (GlcNAc...) asparagine glycans are attached at residues Asn174 and Asn188. A lipid anchor (GPI-anchor amidated asparagine) is attached at Asn188. Positions 189–213 are cleaved as a propeptide — removed in mature form; it reads NSCSSPGGCRLFLSTIPVLWTLLGS.

This sequence belongs to the ephrin family. As to quaternary structure, binds to the receptor tyrosine kinases EPHA3, EPHA4 and EPHA5. Interacts with EPHA8; activates EPHA8.

It is found in the cell membrane. In terms of biological role, cell surface GPI-bound ligand for Eph receptors, a family of receptor tyrosine kinases which are crucial for migration, repulsion and adhesion during neuronal, vascular and epithelial development. Binds promiscuously Eph receptors residing on adjacent cells, leading to contact-dependent bidirectional signaling into neighboring cells. The signaling pathway downstream of the receptor is referred to as forward signaling while the signaling pathway downstream of the ephrin ligand is referred to as reverse signaling. With the EPHA2 receptor may play a role in bone remodeling through regulation of osteoclastogenesis and osteoblastogenesis. In Homo sapiens (Human), this protein is Ephrin-A2 (EFNA2).